The chain runs to 497 residues: Glycogen synthase (497 aa).

Lys-15 is a binding site for ADP-alpha-D-glucose.

The protein belongs to the glycosyltransferase 1 family. Bacterial/plant glycogen synthase subfamily.

The enzyme catalyses [(1-&gt;4)-alpha-D-glucosyl](n) + ADP-alpha-D-glucose = [(1-&gt;4)-alpha-D-glucosyl](n+1) + ADP + H(+). Its pathway is glycan biosynthesis; glycogen biosynthesis. Its function is as follows. Synthesizes alpha-1,4-glucan chains using ADP-glucose. The sequence is that of Glycogen synthase from Thermodesulfovibrio yellowstonii (strain ATCC 51303 / DSM 11347 / YP87).